A 294-amino-acid polypeptide reads, in one-letter code: Probable metallo-hydrolase BURPS1710b_2304 (294 aa).

A divalent metal cation is bound by residues His-68, His-70, Asp-72, His-73, His-143, Asp-170, and His-212.

Belongs to the metallo-beta-lactamase superfamily. A divalent metal cation serves as cofactor.

Its function is as follows. Probable hydrolase. Does not have beta-lactamase activity. The polypeptide is Probable metallo-hydrolase BURPS1710b_2304 (Burkholderia pseudomallei (strain 1710b)).